The sequence spans 358 residues: B3 domain-containing protein Os12g0592300 (358 aa).

The segment at residues 25 to 122 is a DNA-binding region (TF-B3 1); that stretch reads RIRFFRLMTG…SFDVLIFDAS (98 aa). Residues 148–215 are disordered; that stretch reads YHLSDSEDTS…EKSDDDDEHA (68 aa). Residues 156-181 are compositionally biased toward polar residues; the sequence is TSTPSTFLVGSPHKASTSKKLNGKTK. Over residues 203–215 the composition is skewed to acidic residues; the sequence is IEEEKSDDDDEHA. A DNA-binding region (TF-B3 2) is located at residues 252–350; the sequence is FVTVLQAPQI…TMTVHVIGKV (99 aa).

It localises to the nucleus. The sequence is that of B3 domain-containing protein Os12g0592300 from Oryza sativa subsp. japonica (Rice).